The chain runs to 1597 residues: Collagen alpha-1(XVII) chain (1597 aa).

Disordered stretches follow at residues 1 to 155 (MDVT…PSTR) and 168 to 188 (GSRS…PIPK). The Cytoplasmic portion of the chain corresponds to 1–468 (MDVTKKNKRD…CGSCCSWWKW (468 aa)). A nonhelical region (NC16A) region spans residues 1–567 (MDVTKKNKRD…AEQENGNLRG (567 aa)). A compositionally biased stretch (basic and acidic residues) spans 9–19 (RDGSEVTERII). Polar residues-rich tracts occupy residues 58–96 (THGS…SPGS), 111–120 (EGSSSGNSSP), and 170–184 (RSAS…SNTL). The tract at residues 146–231 (RLQSASPSTR…WSSTLPAGSS (86 aa)) is necessary for interaction with DST and for the recruitment of DST to hemidesmosome. Residues 469 to 489 (LLGLLLTWLLLLGLLFGLIAL) traverse the membrane as a helical; Signal-anchor for type II membrane protein segment. Residues 490-1597 (AEEVRALKAR…KGGSWRLTSY (1108 aa)) lie on the Extracellular side of the membrane. Disordered regions lie at residues 562-857 (NGNL…SSSS), 907-927 (LRGP…FRVR), 970-1041 (LETY…ISSS), 1289-1316 (TAGV…VSGA), and 1344-1394 (FIVG…SSMG). Positions 568–1572 (SPGPKGDMGS…ELPLEEQPLA (1005 aa)) are triple-helical region. Over residues 604–632 (PKGQKGSVGEPGMEGPMGQRGREGPMGPR) the composition is skewed to low complexity. Gly residues predominate over residues 665 to 674 (GPKGSGGSPG). Composition is skewed to low complexity over residues 730-748 (PGAV…AGPD) and 774-796 (DPGK…PGRP). Positions 820 to 838 (PGPPGPPGAMGPPGPPGAP) are enriched in pro residues. Low complexity predominate over residues 847–857 (AGESFMGSSSS). Pro residues-rich tracts occupy residues 910-922 (PPGP…PPDL), 977-986 (PPGPPGPPGP), 1023-1035 (PGPP…PGPP), 1296-1310 (PGPP…PRGP), and 1348-1357 (PPGPPGPQGP). The segment covering 1377–1393 (SSHSASVSRGSSYSSSM) has biased composition (low complexity). N1493 carries N-linked (GlcNAc...) asparagine glycosylation. Residues 1531–1566 (GHPALEGTREKKETKVTKSMRGGEREASPSSHELPL) form a disordered region. The segment covering 1537 to 1557 (GTREKKETKVTKSMRGGEREA) has biased composition (basic and acidic residues). The tract at residues 1573 to 1597 (SVLAMAYGVHVKISPKGGSWRLTSY) is nonhelical region (NC1).

In terms of assembly, homotrimers of alpha 1(XVII)chains. Interacts (via cytoplasmic region) with ITGB4 (via cytoplasmic region). Interacts (via cytoplasmic region) with DST (via N-terminus). Interacts (via N-terminus) with PLEC. Interacts (via cytoplasmic region) with DSP. The intracellular/endo domain is disulfide-linked. In terms of processing, prolines at the third position of the tripeptide repeating unit (G-X-Y) are hydroxylated in some or all of the chains. Post-translationally, the ectodomain is shedded from the surface of keratinocytes resulting in a 120-kDa soluble form, also named as 120 kDa linear IgA disease antigen homolog. The shedding is mediated by membrane-bound metalloproteases. As to expression, upper lamina lucidalhemidesmosome.

It localises to the cell junction. Its subcellular location is the hemidesmosome. It is found in the membrane. The protein localises to the secreted. The protein resides in the extracellular space. It localises to the extracellular matrix. Its subcellular location is the basement membrane. The 120 kDa linear IgA disease antigen homolog is an anchoring filament component involved in dermal-epidermal cohesion. The sequence is that of Collagen alpha-1(XVII) chain (COL17A1) from Canis lupus familiaris (Dog).